A 1237-amino-acid chain; its full sequence is MSSAPRRPASGADSFRTPEPEILGPATAGFPEQEEDELHRTLGVERFEEILQEAGSRGGEEPGRSYGEEDFEYHRQSSHHIHHPLSTHLPPDTRRRKTPQGPGRKSRRRPGASPTGETPTIEEGEEDEDEASEAEGARAPTQPSPASTPSSVQFFLQEDDGADRKAERTSPSPPPPLPHQEAAPRATKGAQTGALVEEVMAVAGGTAGGDDGGASGRPLTKAQPGHRSYNLQERRRIGSMTGAEQALLPRVPTDESEAQTLATADLDLMKSHRFEDVPGVRRHLVRKNAKGSVQSGREGREPGPTPRARPRAPHKPHEVFVELNELLLDKNQEPQWRETARWIKFEEDVEEETERWGKPHVASLSFRSLLELRRTLAHGAVLLDLDQQTLPGVAHQVVEQMVISDQIKAEDRADVLRALLLKHSHPSDEKDFSFPRNISAGSLGSLLGHHHGQGAESDPHVTEPLIGGVPETRLEVERERELSPPAPPAGITRSKSKHELKLLEKIPENAEATVVLVGCVEFLSRPTMAFVRLREAVELDAVLEVPVPVRFLFLLLGPSSANMDYHEIGRSISTLMSDKQFHEAAYLADEREDLLTAINAFLDCSVVLPPSEVQGEELLRSVAHFQRQMLKKREEQGRLLPTGAGLEPKSAQDKALLQMVEAAGAVEDDPLRRTGRPFGGLIRDVRRRYPHYLSDFRDALDPQCLAAVIFIYFAALSPAITFGGLLGEKTQDLIGVSELIMSTALQGVVFCLLGAQPLLVIGFSGPLLVFEEAFFSFCSSNDLEYLVGRVWIGFWLVLLALLMVALEGSFLVRFVSRFTQEIFAFLISLIFIYETFYKLVKIFQEHPLHGCSVSNSSEADSGDNATWAGTRVTLGLGNGSSAGPAGQGRPRGQPNTALLSLVLMAGTFFIAFFLRKFKNGRFFPGRVRRVIGDFGVPIAILIMVLVDYSIEDTYTQKLSVPSGFSVTAPEKRGWVINPLGEKSSFPVWMMVASLLPAILVFILIFMETQITTLIISKKERMLQKGSGFHLDLLLIVAMGGICALFGLPWLAAATVRSVTHANALTVMSKAVAPGDKPKIQEVKEQRVTGLLVALLVGLSIVIGDLLRQIPLAVLFGIFLYMGVTSLNGIQFYERLHLLLMPPKHHPDVTYVKKVRTLRMHLFTALQLLCLALLWAVMSTAASLAFPFILILTVPLRMVVLTRIFTEREMKCLDANEAEPVFDEREGVDEYNEMPMPV.

A disordered region spans residues 1-237 (MSSAPRRPAS…SYNLQERRRI (237 aa)). Residues 1-704 (MSSAPRRPAS…DFRDALDPQC (704 aa)) lie on the Cytoplasmic side of the membrane. Basic and acidic residues-rich tracts occupy residues 37–49 (ELHR…RFEE) and 58–75 (GGEE…EYHR). Composition is skewed to basic residues over residues 76 to 85 (QSSHHIHHPL) and 94 to 110 (RRRK…RRRP). Phosphoserine is present on residues Ser113, Ser132, Ser144, Ser170, and Ser172. Over residues 120-133 (TIEEGEEDEDEASE) the composition is skewed to acidic residues. The span at 137–151 (ARAPTQPSPASTPSS) shows a compositional bias: low complexity. Over residues 205–215 (GTAGGDDGGAS) the composition is skewed to gly residues. The residue at position 239 (Ser239) is a Phosphoserine. At Thr253 the chain carries Phosphothreonine. Lys270 carries the post-translational modification N6-methyllysine. Residues 286–316 (RKNAKGSVQSGREGREPGPTPRARPRAPHKP) are disordered. Ser439 is subject to Phosphoserine. Residues 445–466 (SLLGHHHGQGAESDPHVTEPLI) form a disordered region. A membrane (anion exchange) region spans residues 704-1237 (CLAAVIFIYF…DEYNEMPMPV (534 aa)). 4 consecutive transmembrane segments (helical) span residues 705-725 (LAAV…FGGL), 750-770 (FCLL…LLVF), 792-812 (IGFW…SFLV), and 822-842 (IFAF…LVKI). Topologically, residues 843–893 (FQEHPLHGCSVSNSSEADSGDNATWAGTRVTLGLGNGSSAGPAGQGRPRGQ) are extracellular. Asn855, Asn864, and Asn878 each carry an N-linked (GlcNAc...) asparagine glycan. A helical transmembrane segment spans residues 894–914 (PNTALLSLVLMAGTFFIAFFL). At 915–929 (RKFKNGRFFPGRVRR) the chain is on the cytoplasmic side. Helical transmembrane passes span 930-950 (VIGD…DYSI), 985-1005 (FPVW…ILIF), 1032-1052 (LLLI…WLAA), 1086-1106 (RVTG…GDLL), and 1109-1129 (IPLA…LNGI). Cys1169 carries the S-palmitoyl cysteine lipid modification. Residues 1170 to 1190 (LALLWAVMSTAASLAFPFILI) traverse the membrane as a helical segment.

It belongs to the anion exchanger (TC 2.A.31) family.

The protein resides in the apical cell membrane. Its subcellular location is the basolateral cell membrane. It carries out the reaction hydrogencarbonate(in) + chloride(out) = hydrogencarbonate(out) + chloride(in). Functionally, sodium-independent anion exchanger which mediates the electroneutral exchange of chloride for bicarbonate ions across the cell membrane. Plays an important role in osteoclast differentiation and function. Regulates bone resorption and calpain-dependent actin cytoskeleton organization in osteoclasts via anion exchange-dependent control of pH. Essential for intracellular pH regulation in CD8(+) T-cells upon CD3 stimulation, modulating CD8(+) T-cell response. The chain is Anion exchange protein 2 (SLC4A2) from Equus caballus (Horse).